Consider the following 316-residue polypeptide: Ribosomal protein L11 methyltransferase (316 aa).

4 residues coordinate S-adenosyl-L-methionine: Thr-163, Gly-184, Asp-206, and Asn-249.

Belongs to the methyltransferase superfamily. PrmA family.

Its subcellular location is the cytoplasm. It carries out the reaction L-lysyl-[protein] + 3 S-adenosyl-L-methionine = N(6),N(6),N(6)-trimethyl-L-lysyl-[protein] + 3 S-adenosyl-L-homocysteine + 3 H(+). Its function is as follows. Methylates ribosomal protein L11. This Pediococcus pentosaceus (strain ATCC 25745 / CCUG 21536 / LMG 10740 / 183-1w) protein is Ribosomal protein L11 methyltransferase.